A 285-amino-acid polypeptide reads, in one-letter code: 4-hydroxybenzoate octaprenyltransferase (285 aa).

Transmembrane regions (helical) follow at residues 33–53, 93–113, 134–154, 166–186, 209–229, 233–253, and 265–285; these read FLAA…LGVV, LILF…MNTL, ITYL…PMAY, WLLF…YAMV, LMIG…GIQL, SLYN…QWLI, and FLNN…SVLI.

This sequence belongs to the UbiA prenyltransferase family. The cofactor is Mg(2+).

Its subcellular location is the cell inner membrane. The enzyme catalyses all-trans-octaprenyl diphosphate + 4-hydroxybenzoate = 4-hydroxy-3-(all-trans-octaprenyl)benzoate + diphosphate. It functions in the pathway cofactor biosynthesis; ubiquinone biosynthesis. Catalyzes the prenylation of para-hydroxybenzoate (PHB) with an all-trans polyprenyl group. Mediates the second step in the final reaction sequence of ubiquinone-8 (UQ-8) biosynthesis, which is the condensation of the polyisoprenoid side chain with PHB, generating the first membrane-bound Q intermediate 3-octaprenyl-4-hydroxybenzoate. The sequence is that of 4-hydroxybenzoate octaprenyltransferase from Aliivibrio salmonicida (strain LFI1238) (Vibrio salmonicida (strain LFI1238)).